A 261-amino-acid chain; its full sequence is RING finger protein 208 (261 aa).

Residues 83–106 are disordered; that stretch reads PALEGAPHTPPLPRRPRKGSSELG. Ser-102 bears the Phosphoserine mark. The RING-type zinc finger occupies 143-190; that stretch reads CPTCGHSYNVTQRRPRVLSCLHSVCEQCLQILYESCPKYKFISCPTCR.

The protein is RING finger protein 208 (RNF208) of Homo sapiens (Human).